The primary structure comprises 75 residues: Mating pheromone Er-10 (75 aa).

Residues methionine 1–alanine 19 form the signal peptide. The propeptide occupies phenylalanine 20–arginine 37. Disulfide bonds link cysteine 40/cysteine 56, cysteine 47/cysteine 74, and cysteine 52/cysteine 64.

Homodimer.

It is found in the secreted. Its function is as follows. Mating ciliate pheromones (or gamones) are diffusible extracellular communication signals that distinguish different intraspecific classes of cells commonly referred to as 'mating types'. They prepare the latter for conjugation by changing their cell surface properties. This Euplotes raikovi protein is Mating pheromone Er-10 (MAT10).